Reading from the N-terminus, the 357-residue chain is UPF0283 membrane protein HSM_0945 (357 aa).

3 consecutive transmembrane segments (helical) span residues 67–87 (LMAT…QWLV), 96–116 (IAFV…GTII), and 213–233 (AVES…MFFI).

It belongs to the UPF0283 family.

The protein resides in the cell inner membrane. This Histophilus somni (strain 2336) (Haemophilus somnus) protein is UPF0283 membrane protein HSM_0945.